The following is a 248-amino-acid chain: Geranylgeranylglyceryl phosphate synthase (248 aa).

Mg(2+) is bound by residues aspartate 25 and serine 50. Residues 170–176 (YLEAGSG), 201–202 (GG), and 223–224 (GT) contribute to the sn-glycerol 1-phosphate site.

This sequence belongs to the GGGP/HepGP synthase family. Group II subfamily. The cofactor is Mg(2+).

The protein resides in the cytoplasm. It catalyses the reaction sn-glycerol 1-phosphate + (2E,6E,10E)-geranylgeranyl diphosphate = sn-3-O-(geranylgeranyl)glycerol 1-phosphate + diphosphate. Its pathway is membrane lipid metabolism; glycerophospholipid metabolism. In terms of biological role, prenyltransferase that catalyzes the transfer of the geranylgeranyl moiety of geranylgeranyl diphosphate (GGPP) to the C3 hydroxyl of sn-glycerol-1-phosphate (G1P). This reaction is the first ether-bond-formation step in the biosynthesis of archaeal membrane lipids. The sequence is that of Geranylgeranylglyceryl phosphate synthase from Methanococcus aeolicus (strain ATCC BAA-1280 / DSM 17508 / OCM 812 / Nankai-3).